The sequence spans 458 residues: UDP-N-acetylmuramoylalanine--D-glutamate ligase (458 aa).

124–130 (GSDGKTT) serves as a coordination point for ATP.

The protein belongs to the MurCDEF family.

The protein resides in the cytoplasm. It carries out the reaction UDP-N-acetyl-alpha-D-muramoyl-L-alanine + D-glutamate + ATP = UDP-N-acetyl-alpha-D-muramoyl-L-alanyl-D-glutamate + ADP + phosphate + H(+). Its pathway is cell wall biogenesis; peptidoglycan biosynthesis. In terms of biological role, cell wall formation. Catalyzes the addition of glutamate to the nucleotide precursor UDP-N-acetylmuramoyl-L-alanine (UMA). In Clostridium tetani (strain Massachusetts / E88), this protein is UDP-N-acetylmuramoylalanine--D-glutamate ligase.